The sequence spans 185 residues: Alcohol dehydrogenase 1 (185 aa).

NAD(+) contacts are provided by residues 10 to 15 (GLGGVG), aspartate 34, lysine 39, 103 to 105 (VGV), and arginine 180.

Belongs to the zinc-containing alcohol dehydrogenase family. Class-I subfamily. As to quaternary structure, homodimer. It depends on Zn(2+) as a cofactor.

The protein resides in the cytoplasm. The catalysed reaction is a primary alcohol + NAD(+) = an aldehyde + NADH + H(+). It carries out the reaction a secondary alcohol + NAD(+) = a ketone + NADH + H(+). The sequence is that of Alcohol dehydrogenase 1 (ADH1) from Anas platyrhynchos (Mallard).